The sequence spans 343 residues: MKTKEFHFNLSHSLIEQYPSEKRGSSRLIVLDPQLQKIYHKNSVNNILKYINSNIFNNSKARKSRIYAESEMSSNVEFLILDRIDTNLFTALVSKSKKQIIGNFYKFPEGLMDEILSKNSSEVVLKFNNNVGEDYFEKHCFVPLPSYIKRDYDKIDEDRYQTIYSKYVGSTASATAGLHFSRDLFSAFENNNIEYDFITLHVGAGTFLPVRSKKVEEHNMHFETFLIKDFVAVRLQNAKLLGKRILSIVTTTLRALESSYDNNLKKFKTGQQSTNLFIYPGKNYCFKFVDMLFTNFHTPQSTLLMLVSSFAGKDFVFSFYEEAINKGYKFFSYGDAMLILNNI.

It belongs to the QueA family. As to quaternary structure, monomer.

It localises to the cytoplasm. The catalysed reaction is 7-aminomethyl-7-carbaguanosine(34) in tRNA + S-adenosyl-L-methionine = epoxyqueuosine(34) in tRNA + adenine + L-methionine + 2 H(+). The protein operates within tRNA modification; tRNA-queuosine biosynthesis. Functionally, transfers and isomerizes the ribose moiety from AdoMet to the 7-aminomethyl group of 7-deazaguanine (preQ1-tRNA) to give epoxyqueuosine (oQ-tRNA). The protein is S-adenosylmethionine:tRNA ribosyltransferase-isomerase of Borreliella burgdorferi (strain ATCC 35210 / DSM 4680 / CIP 102532 / B31) (Borrelia burgdorferi).